A 155-amino-acid polypeptide reads, in one-letter code: Large ribosomal subunit protein uL15 (155 aa).

Residues 1–16 (MVRRFKRAVKYRRGSR) are compositionally biased toward basic residues. The interval 1–35 (MVRRFKRAVKYRRGSRTHGWGRVGQHRKSGGSGGK) is disordered.

The protein belongs to the universal ribosomal protein uL15 family. In terms of assembly, part of the 50S ribosomal subunit.

Binds to the 23S rRNA. In Pyrobaculum arsenaticum (strain DSM 13514 / JCM 11321 / PZ6), this protein is Large ribosomal subunit protein uL15.